Reading from the N-terminus, the 363-residue chain is uncharacterized protein (363 aa).

A run of 7 helical transmembrane segments spans residues 20–40 (WFFT…NTNI), 63–83 (INFA…FLVM), 101–121 (FPLI…GVQS), 141–161 (SVWQ…FTAF), 186–206 (FSLL…IMLA), 227–247 (IFKY…CVVL), and 268–288 (FLIV…WYVL). The tract at residues 329–363 (PRADLTPNDTLHMESKKKPLSQSPRVVIEEEDVAE) is disordered.

The protein resides in the membrane. This is an uncharacterized protein from Caenorhabditis elegans.